Consider the following 247-residue polypeptide: Capsid protein (247 aa).

Residues 1-28 (MSGALKRKRSDEVAWSRRRPVKKPVRRA) carry the Bipartite nuclear localization signal motif. The interval 1-39 (MSGALKRKRSDEVAWSRRRPVKKPVRRAPPPRAGPSVRR) is disordered. A compositionally biased stretch (basic residues) spans 16-26 (SRRRPVKKPVR).

This sequence belongs to the geminiviridae capsid protein family. As to quaternary structure, homomultimer. Interacts with the movement protein. Binds to single-stranded and double-stranded viral DNA.

The protein resides in the virion. Its subcellular location is the host nucleus. Its function is as follows. Encapsidates the viral genome into characteristic twinned ('geminate') particles. Binds the genomic viral ssDNA and shuttles it into and out of the cell nucleus. Plays a role in protection of the genome from degradation, virus acquisition and transmission by insect vectors, infectivity, and systemic movement. The CP of monopartite geminiviruses is absolutely essential for virus movement. In Megathyrsus maximus (PanSV), this protein is Capsid protein.